The chain runs to 213 residues: uncharacterized protein (213 aa).

Residues 1-21 form the signal peptide; it reads MKKILFLTVICFCLSSIKAYA.

This is an uncharacterized protein from Rickettsia prowazekii (strain Madrid E).